The chain runs to 477 residues: Ribulose bisphosphate carboxylase large chain (477 aa).

Positions 1-2 (MS) are excised as a propeptide. Residue P3 is modified to N-acetylproline. K14 carries the N6,N6,N6-trimethyllysine modification. 2 residues coordinate substrate: N123 and T173. Catalysis depends on K175, which acts as the Proton acceptor. K177 is a binding site for substrate. K201, D203, and E204 together coordinate Mg(2+). The residue at position 201 (K201) is an N6-carboxylysine. H294 serves as the catalytic Proton acceptor. The substrate site is built by R295, H327, and S379.

It belongs to the RuBisCO large chain family. Type I subfamily. As to quaternary structure, heterohexadecamer of 8 large chains and 8 small chains; disulfide-linked. The disulfide link is formed within the large subunit homodimers. It depends on Mg(2+) as a cofactor. The disulfide bond which can form in the large chain dimeric partners within the hexadecamer appears to be associated with oxidative stress and protein turnover.

The protein localises to the plastid. It localises to the chloroplast. It catalyses the reaction 2 (2R)-3-phosphoglycerate + 2 H(+) = D-ribulose 1,5-bisphosphate + CO2 + H2O. The enzyme catalyses D-ribulose 1,5-bisphosphate + O2 = 2-phosphoglycolate + (2R)-3-phosphoglycerate + 2 H(+). Functionally, ruBisCO catalyzes two reactions: the carboxylation of D-ribulose 1,5-bisphosphate, the primary event in carbon dioxide fixation, as well as the oxidative fragmentation of the pentose substrate in the photorespiration process. Both reactions occur simultaneously and in competition at the same active site. In Manihot esculenta (Cassava), this protein is Ribulose bisphosphate carboxylase large chain.